The sequence spans 114 residues: UPF0757 protein YmgG (114 aa).

It belongs to the UPF0757 family.

This chain is UPF0757 protein YmgG, found in Edwardsiella ictaluri (strain 93-146).